The sequence spans 379 residues: Ribosomal RNA large subunit methyltransferase G (379 aa).

The protein belongs to the methyltransferase superfamily. RlmG family.

The protein resides in the cytoplasm. The enzyme catalyses guanosine(1835) in 23S rRNA + S-adenosyl-L-methionine = N(2)-methylguanosine(1835) in 23S rRNA + S-adenosyl-L-homocysteine + H(+). Functionally, specifically methylates the guanine in position 1835 (m2G1835) of 23S rRNA. The chain is Ribosomal RNA large subunit methyltransferase G from Serratia proteamaculans (strain 568).